We begin with the raw amino-acid sequence, 985 residues long: Regulator of telomere elongation helicase 1 homolog (985 aa).

The Helicase ATP-binding domain maps to 7-303 (AGIPVHFPFE…QDMGGDEPKD (297 aa)). An ATP-binding site is contributed by 42-49 (SPTGTGKT). The [4Fe-4S] cluster site is built by C146, C164, C173, and C209. The DEAH box signature appears at 252–255 (DEAH). Positions 858–884 (GSSGMVKIHKRERSSPTQPESSSQVSK) are disordered. Residues 872-882 (SPTQPESSSQV) show a composition bias toward polar residues. T874 is modified (phosphothreonine).

It belongs to the helicase family. RAD3/XPD subfamily.

The protein resides in the nucleus. It catalyses the reaction ATP + H2O = ADP + phosphate + H(+). Its function is as follows. A probable ATP-dependent DNA helicase implicated in DNA repair and the maintenance of genomic stability. Acts as an anti-recombinase to counteract toxic recombination and limit crossover during meiosis. Regulates meiotic recombination and crossover homeostasis by physically dissociating strand invasion events and thereby promotes noncrossover repair by meiotic synthesis dependent strand annealing (SDSA) as well as disassembly of D loop recombination intermediates. This is Regulator of telomere elongation helicase 1 homolog from Drosophila yakuba (Fruit fly).